A 73-amino-acid chain; its full sequence is Salivary protein FS48 (73 aa).

The signal sequence occupies residues 1-21 (MKFAFAIFVVLAILHTELISA).

It is found in the secreted. Salivary protein that inhibits host voltage-gated potassium channels Kv1.1/KCNA1, Kv1.2/KCNA2 and Kv1.3/KCNA3 likely via a voltage-independent pore-blocking mechanism. Suppresses expression of the Kv1.3/KCNA3 channel in lipopolysaccharide (LPS)-stimulated mouse macrophages and human T-cells. Down-regulates secretion of nitric oxide (NO) and inflammatory cytokines, such as TNF-alpha/TNF, IL-1beta/IL1B and IL6, in LPS-stimulated mouse macrophages in a manner dependent on Kv1.3/KCNA3 channel blockage. Reduces activation of MAPK and NF-kappa-B signaling pathways in LPS-stimulated mouse macrophages. Modulates intracellular Ca(2+) signaling in human PMA/ionomycin-triggered T-cells. Interferes with the activation of the MAPK, NF-kappa-B and NFATc1 pathways in human PMA/ionomycin-triggered T-cells. Reduces proliferation of human PMA/ionomycin-triggered T-cells. Down-regulates secretion of cytokines, such as TNF-alpha/TNF and IL2, in human PMA/ionomycin-triggered T-cells. The protein is Salivary protein FS48 of Xenopsylla cheopis (Oriental rat flea).